We begin with the raw amino-acid sequence, 418 residues long: Histidinol dehydrogenase (418 aa).

Tyr-119, Gln-180, and Asn-203 together coordinate NAD(+). Residues Thr-226, Gln-248, and His-251 each contribute to the substrate site. Positions 248 and 251 each coordinate Zn(2+). Catalysis depends on proton acceptor residues Glu-316 and His-317. Residues His-317, Asp-350, Glu-404, and His-409 each coordinate substrate. Residue Asp-350 coordinates Zn(2+). Zn(2+) is bound at residue His-409.

The protein belongs to the histidinol dehydrogenase family. Zn(2+) is required as a cofactor.

It catalyses the reaction L-histidinol + 2 NAD(+) + H2O = L-histidine + 2 NADH + 3 H(+). It participates in amino-acid biosynthesis; L-histidine biosynthesis; L-histidine from 5-phospho-alpha-D-ribose 1-diphosphate: step 9/9. Its function is as follows. Catalyzes the sequential NAD-dependent oxidations of L-histidinol to L-histidinaldehyde and then to L-histidine. The polypeptide is Histidinol dehydrogenase (Staphylococcus aureus (strain COL)).